The sequence spans 381 residues: L-lactate dehydrogenase (381 aa).

An FMN hydroxy acid dehydrogenase domain is found at 1–380 (MIISSTNDYR…TRDALVDLSK (380 aa)). Substrate is bound at residue tyrosine 24. Residues serine 106 and glutamine 127 each contribute to the FMN site. Tyrosine 129 contacts substrate. An FMN-binding site is contributed by threonine 155. Arginine 164 serves as a coordination point for substrate. Lysine 251 contacts FMN. Histidine 275 (proton acceptor) is an active-site residue. Substrate is bound at residue arginine 278. 306–330 (DSGIRNGLDIVRMLALGADATMLGR) lines the FMN pocket.

This sequence belongs to the FMN-dependent alpha-hydroxy acid dehydrogenase family. FMN serves as cofactor.

Its subcellular location is the cell inner membrane. The catalysed reaction is (S)-lactate + A = pyruvate + AH2. Catalyzes the conversion of L-lactate to pyruvate. Is coupled to the respiratory chain. The sequence is that of L-lactate dehydrogenase from Actinobacillus pleuropneumoniae serotype 3 (strain JL03).